We begin with the raw amino-acid sequence, 313 residues long: Intelectin-1a (313 aa).

Positions 1–18 are cleaved as a signal peptide; the sequence is MTQLGFLLFIMVATRGCS. Residues 32 to 251 enclose the Fibrinogen C-terminal domain; sequence SFFSSLPRSC…NNERAASALC (220 aa). Residues cysteine 41 and cysteine 70 are joined by a disulfide bond. 7 residues coordinate Ca(2+): histidine 86, glutamate 87, asparagine 89, glycine 92, glycine 97, aspartate 98, and aspartate 133. Disulfide bonds link cysteine 94–cysteine 280, cysteine 199–cysteine 259, and cysteine 251–cysteine 265. Ca(2+) is bound by residues asparagine 260, glutamate 262, glutamate 274, and aspartate 282. Residues 262–263 and glutamate 274 contribute to the a carbohydrate site; that span reads EH. Residue serine 298 is the site of GPI-anchor amidated serine attachment. A propeptide spanning residues 299 to 313 is cleaved from the precursor; it reads SSRKITEAAVLLFYR.

Monomer. May interact with LTF. As to expression, expressed in small intestinal Paneth cells in uninfected mice. Expression also detected in various other tissues including stomach, kidney, ovary and brain.

Its subcellular location is the cell membrane. The protein localises to the secreted. Lectin that specifically recognizes microbial carbohydrate chains in a calcium-dependent manner. Binds to microbial glycans that contain a terminal acyclic 1,2-diol moiety, including beta-linked D-galactofuranose (beta-Galf), D-phosphoglycerol-modified glycans, D-glycero-D-talo-oct-2-ulosonic acid (KO) and 3-deoxy-D-manno-oct-2-ulosonic acid (KDO). Binds to glycans from Gram-positive and Gram-negative bacteria, including K.pneumoniae, S.pneumoniae, Y.pestis, P.mirabilis and P.vulgaris. Does not bind mammalian glycans. Probably plays a role in the defense system against microorganisms. May function as adipokine that has no effect on basal glucose uptake but enhances insulin-stimulated glucose uptake in adipocytes. Increases AKT phosphorylation in the absence and presence of insulin. May interact with lactoferrin/LTF and increase its uptake, and may thereby play a role in iron absorption. This is Intelectin-1a (Itln1) from Mus musculus (Mouse).